The following is a 103-amino-acid chain: Integration host factor subunit alpha (103 aa).

The interval 51–73 (FGNFQLRDKPQRPGRNPKTGEEI) is disordered.

It belongs to the bacterial histone-like protein family. In terms of assembly, heterodimer of an alpha and a beta chain.

Its function is as follows. This protein is one of the two subunits of integration host factor, a specific DNA-binding protein that functions in genetic recombination as well as in transcriptional and translational control. This chain is Integration host factor subunit alpha, found in Azoarcus sp. (strain BH72).